Reading from the N-terminus, the 113-residue chain is Large ribosomal subunit protein bL17 (113 aa).

The protein belongs to the bacterial ribosomal protein bL17 family. In terms of assembly, part of the 50S ribosomal subunit. Contacts protein L32.

The chain is Large ribosomal subunit protein bL17 from Clostridium perfringens (strain ATCC 13124 / DSM 756 / JCM 1290 / NCIMB 6125 / NCTC 8237 / Type A).